The chain runs to 596 residues: Serine/threonine-protein kinase PknH (596 aa).

The Cytoplasmic portion of the chain corresponds to 1-373; sequence MSDAQDSRVG…QTPRKTNPWP (373 aa). The Protein kinase domain maps to 16–276; sequence YHLKRLLGRG…DLALAAHEAL (261 aa). Residues 22–30 and Lys45 each bind ATP; that span reads LGRGGMGEV. Catalysis depends on Asp139, which acts as the Proton acceptor. At Thr170 the chain carries Phosphothreonine. Residues 292-368 are disordered; sequence QESTLPGTAA…PSPWAQTPRK (77 aa). The span at 307 to 318 shows a compositional bias: pro residues; the sequence is PTMPTVTPPPIQ. Residues 374 to 394 traverse the membrane as a helical segment; it reads LVAGAAAVVLVLVLGAIGIWI. Topologically, residues 395–596 are extracellular; the sequence is ANRPKPVQPP…AKIVDKVNKE (202 aa).

Belongs to the protein kinase superfamily. Ser/Thr protein kinase family. Autophosphorylated on threonine and serine residues.

Its subcellular location is the cell membrane. It catalyses the reaction L-seryl-[protein] + ATP = O-phospho-L-seryl-[protein] + ADP + H(+). The enzyme catalyses L-threonyl-[protein] + ATP = O-phospho-L-threonyl-[protein] + ADP + H(+). The protein is Serine/threonine-protein kinase PknH (pknH) of Mycobacterium bovis (strain ATCC BAA-935 / AF2122/97).